The following is a 441-amino-acid chain: tRNA modification GTPase MnmE (441 aa).

3 residues coordinate (6S)-5-formyl-5,6,7,8-tetrahydrofolate: R21, E79, and K118. A TrmE-type G domain is found at 214-367 (GIHITILGAP…LVAELARVVE (154 aa)). Residues 224–229 (NAGKSS), 243–249 (SAQAGTT), and 268–271 (DTAG) contribute to the GTP site. Residues S228 and T249 each coordinate Mg(2+). (6S)-5-formyl-5,6,7,8-tetrahydrofolate is bound at residue K441.

Belongs to the TRAFAC class TrmE-Era-EngA-EngB-Septin-like GTPase superfamily. TrmE GTPase family. In terms of assembly, homodimer. Heterotetramer of two MnmE and two MnmG subunits. Requires K(+) as cofactor.

Its subcellular location is the cytoplasm. Exhibits a very high intrinsic GTPase hydrolysis rate. Involved in the addition of a carboxymethylaminomethyl (cmnm) group at the wobble position (U34) of certain tRNAs, forming tRNA-cmnm(5)s(2)U34. This Paramagnetospirillum magneticum (strain ATCC 700264 / AMB-1) (Magnetospirillum magneticum) protein is tRNA modification GTPase MnmE.